Reading from the N-terminus, the 151-residue chain is Deoxyuridine 5'-triphosphate nucleotidohydrolase (151 aa).

Residues 69–71, Asn-82, 86–88, and Met-96 each bind substrate; these read RSG and LID.

The protein belongs to the dUTPase family. Requires Mg(2+) as cofactor.

The enzyme catalyses dUTP + H2O = dUMP + diphosphate + H(+). The protein operates within pyrimidine metabolism; dUMP biosynthesis; dUMP from dCTP (dUTP route): step 2/2. This enzyme is involved in nucleotide metabolism: it produces dUMP, the immediate precursor of thymidine nucleotides and it decreases the intracellular concentration of dUTP so that uracil cannot be incorporated into DNA. The sequence is that of Deoxyuridine 5'-triphosphate nucleotidohydrolase from Blochmanniella floridana.